The sequence spans 198 residues: Protein ORFi in retron Ec67 (198 aa).

It belongs to the CI repressor protein family.

This Escherichia coli protein is Protein ORFi in retron Ec67.